The primary structure comprises 267 residues: Hydroxyethylthiazole kinase (267 aa).

A substrate-binding site is contributed by M46. The ATP site is built by R121 and T167. A194 serves as a coordination point for substrate.

It belongs to the Thz kinase family. Requires Mg(2+) as cofactor.

It carries out the reaction 5-(2-hydroxyethyl)-4-methylthiazole + ATP = 4-methyl-5-(2-phosphooxyethyl)-thiazole + ADP + H(+). It functions in the pathway cofactor biosynthesis; thiamine diphosphate biosynthesis; 4-methyl-5-(2-phosphoethyl)-thiazole from 5-(2-hydroxyethyl)-4-methylthiazole: step 1/1. Functionally, catalyzes the phosphorylation of the hydroxyl group of 4-methyl-5-beta-hydroxyethylthiazole (THZ). The sequence is that of Hydroxyethylthiazole kinase from Rhizobium leguminosarum bv. trifolii (strain WSM2304).